A 340-amino-acid polypeptide reads, in one-letter code: Phosphoribosylformylglycinamidine cyclo-ligase (340 aa).

Belongs to the AIR synthase family.

It is found in the cytoplasm. It carries out the reaction 2-formamido-N(1)-(5-O-phospho-beta-D-ribosyl)acetamidine + ATP = 5-amino-1-(5-phospho-beta-D-ribosyl)imidazole + ADP + phosphate + H(+). It functions in the pathway purine metabolism; IMP biosynthesis via de novo pathway; 5-amino-1-(5-phospho-D-ribosyl)imidazole from N(2)-formyl-N(1)-(5-phospho-D-ribosyl)glycinamide: step 2/2. This chain is Phosphoribosylformylglycinamidine cyclo-ligase, found in Streptococcus pyogenes serotype M2 (strain MGAS10270).